Reading from the N-terminus, the 274-residue chain is Lipoprotein E (274 aa).

Residues 1-20 (MKTTLKMTALAALSAFVLAG) form the signal peptide. A lipid anchor (N-palmitoyl cysteine) is attached at Cys-21. Residue Cys-21 is the site of S-diacylglycerol cysteine attachment.

It is found in the cell outer membrane. This is Lipoprotein E (hel) from Haemophilus influenzae (strain ATCC 51907 / DSM 11121 / KW20 / Rd).